The primary structure comprises 320 residues: Meso-diaminopimelate D-dehydrogenase (320 aa).

Residues 11–14 (YGNL), 35–37 (SRR), 65–68 (CMGS), 88–90 (TYD), and 117–121 (TGWDP) each bind NADP(+). Substrate contacts are provided by residues Asp-90, Asp-120, Trp-144, 150–151 (QG), Thr-169, Arg-195, His-244, and Asn-270.

Homodimer.

The enzyme catalyses meso-2,6-diaminopimelate + NADP(+) + H2O = (S)-2-amino-6-oxoheptanedioate + NH4(+) + NADPH + H(+). It functions in the pathway amino-acid biosynthesis; L-lysine biosynthesis via DAP pathway; DL-2,6-diaminopimelate from (S)-tetrahydrodipicolinate: step 1/1. L,L-2,6-diaminopimelate and D,D-2,6-diaminopimelate competitively inhibit the oxidative deamination of meso-2,6-diaminopimelate. The enzyme is also inhibited by L-cysteine, and by p-chloromercuribenzoate, iodoacetic acid and HgCl(2) in vitro. Functionally, catalyzes the reversible NADPH-dependent reductive amination of L-2-amino-6-oxopimelate, the acyclic form of L-tetrahydrodipicolinate, to generate the meso compound, D,L-2,6-diaminopimelate. Probably plays a role in lysine biosynthesis. Exhibits a high substrate specificity for meso-2,6-diaminopimelate, since L,L-2,6-diaminopimelate, D,D-2,6-diaminopimelate, L-glutamate, L-alanine, L-leucine, L-valine, L-aspartate, L-threonine, L-homoserine, L-methionine, L-lysine, L-serine, L-phenylalanine, L-tyrosine, L-tryptophan, L-ornithine, L-histidine, L-arginine, D-glutamate, and D-alanine are not substrates for the oxidative deamination reaction. Can use NAD(+) only poorly since the activity observed in the presence of NAD(+) is about 3% of that with NADP(+). The polypeptide is Meso-diaminopimelate D-dehydrogenase (ddh) (Corynebacterium glutamicum (strain ATCC 13032 / DSM 20300 / JCM 1318 / BCRC 11384 / CCUG 27702 / LMG 3730 / NBRC 12168 / NCIMB 10025 / NRRL B-2784 / 534)).